Here is a 579-residue protein sequence, read N- to C-terminus: Probable zinc metalloprotease EGY1, chloroplastic (579 aa).

Disordered stretches follow at residues M1–A42 and G78–P146. The N-terminal 44 residues, M1 to C44, are a transit peptide targeting the chloroplast. A compositionally biased stretch (low complexity) spans L16 to A42. A compositionally biased stretch (gly residues) spans G78 to G92. Low complexity-rich tracts occupy residues A104–V115 and S125–G137. 8 consecutive transmembrane segments (helical) span residues Y272 to A292, L321 to F341, L357 to F377, M392 to L412, A419 to V439, A452 to F472, L505 to I525, and A547 to L567.

It belongs to the peptidase M50B family.

It localises to the plastid. Its subcellular location is the chloroplast membrane. Functionally, probable membrane-associated metalloprotease that may be involved in chloroplast development. The protein is Probable zinc metalloprotease EGY1, chloroplastic (EGY1) of Oryza sativa subsp. japonica (Rice).